Here is a 122-residue protein sequence, read N- to C-terminus: Ribonuclease P protein component (122 aa).

Belongs to the RnpA family. As to quaternary structure, consists of a catalytic RNA component (M1 or rnpB) and a protein subunit.

It carries out the reaction Endonucleolytic cleavage of RNA, removing 5'-extranucleotides from tRNA precursor.. Its function is as follows. RNaseP catalyzes the removal of the 5'-leader sequence from pre-tRNA to produce the mature 5'-terminus. It can also cleave other RNA substrates such as 4.5S RNA. The protein component plays an auxiliary but essential role in vivo by binding to the 5'-leader sequence and broadening the substrate specificity of the ribozyme. The sequence is that of Ribonuclease P protein component from Roseiflexus sp. (strain RS-1).